Reading from the N-terminus, the 158-residue chain is 18.1 kDa class I heat shock protein (158 aa).

A sHSP domain is found at 44-158 (ENPAFVSTRV…AEVKSIEISG (115 aa)).

It belongs to the small heat shock protein (HSP20) family. In terms of assembly, forms oligomeric structures.

The protein localises to the cytoplasm. The sequence is that of 18.1 kDa class I heat shock protein (HSP18.1) from Pisum sativum (Garden pea).